Reading from the N-terminus, the 365-residue chain is Ribosomal RNA large subunit methyltransferase F (365 aa).

Positions 1 to 50 (MSKPAVKSVPSATAKTATRAVNIRQKVKAPKQAKPEAKGRAKPSKDKPRA) are disordered. Residues 33 to 50 (AKPEAKGRAKPSKDKPRA) are compositionally biased toward basic and acidic residues.

The protein belongs to the methyltransferase superfamily. METTL16/RlmF family.

The protein resides in the cytoplasm. It catalyses the reaction adenosine(1618) in 23S rRNA + S-adenosyl-L-methionine = N(6)-methyladenosine(1618) in 23S rRNA + S-adenosyl-L-homocysteine + H(+). Specifically methylates the adenine in position 1618 of 23S rRNA. The protein is Ribosomal RNA large subunit methyltransferase F of Shewanella baltica (strain OS155 / ATCC BAA-1091).